Reading from the N-terminus, the 1405-residue chain is Sterol 3-beta-glucosyltransferase (1405 aa).

Basic and acidic residues-rich tracts occupy residues 1-16 (MRPF…DRKL) and 95-105 (TGQRPRKESSV). Disordered regions lie at residues 1 to 27 (MRPF…SASR), 83 to 186 (ARFD…SATP), and 203 to 230 (DLKA…ASVS). A compositionally biased stretch (polar residues) spans 106–115 (RKGTSVSVNT). Positions 116–126 (SSLDPSQRSSS) are enriched in low complexity. Positions 206–218 (ASSTERSQSSLNE) are enriched in polar residues. The 40-residue stretch at 246–285 (EKVLVEYACSLLQSMLLQGYMYVTEGHICFYAYLPKKSTV) folds into the GRAM 1 domain. The region spanning 285 to 384 (VAIKSGYLHK…WVKALQKVIF (100 aa)) is the PH domain. 2 disordered regions span residues 461–526 (SQHL…DSSD) and 566–642 (TIYG…SGAP). Polar residues predominate over residues 483–493 (RWSLTSGTSRA). Basic and acidic residues predominate over residues 570-589 (LDRRPSGRERRGRRNSDETA). Polar residues predominate over residues 590 to 603 (RSPSTRVNVGTGQQ). A compositionally biased stretch (basic and acidic residues) spans 606 to 624 (ELDRRTDGNTSGREARDTT). Polar residues predominate over residues 626–642 (ESDQYTQDPTKSFSGAP). Residues 724–790 (DRFRAHFALP…RDIENVEKEK (67 aa)) enclose the GRAM 2 domain. The UDP-alpha-D-glucose site is built by S911, R912, D914, A1214, H1216, H1229, G1233, T1234, D1253, and Q1254. Residues 1330 to 1367 (SIASSTPFSPTPSAKTAAEQDADDDVEDSEEWTFVGDD) form a disordered region. Low complexity predominate over residues 1332–1348 (ASSTPFSPTPSAKTAAE). Acidic residues predominate over residues 1349 to 1367 (QDADDDVEDSEEWTFVGDD).

Belongs to the glycosyltransferase 28 family.

It is found in the cytoplasm. It localises to the preautophagosomal structure membrane. It catalyses the reaction a sterol + UDP-alpha-D-glucose = a sterol 3-beta-D-glucoside + UDP + H(+). It carries out the reaction ergosterol + UDP-alpha-D-glucose = ergosteryl 3-beta-D-glucoside + UDP + H(+). Functionally, sterol glycosyltransferase responsible for the glycosylation of ergosterol to form ergosterol-glucoside. The sequence is that of Sterol 3-beta-glucosyltransferase from Aspergillus fumigatus (strain ATCC MYA-4609 / CBS 101355 / FGSC A1100 / Af293) (Neosartorya fumigata).